The primary structure comprises 575 residues: Sulfite reductase [NADPH] hemoprotein beta-component (575 aa).

[4Fe-4S] cluster-binding residues include Cys440, Cys446, Cys485, and Cys489. Cys489 contributes to the siroheme binding site.

Belongs to the nitrite and sulfite reductase 4Fe-4S domain family. As to quaternary structure, alpha(8)-beta(8). The alpha component is a flavoprotein, the beta component is a hemoprotein. The cofactor is siroheme. It depends on [4Fe-4S] cluster as a cofactor.

The enzyme catalyses hydrogen sulfide + 3 NADP(+) + 3 H2O = sulfite + 3 NADPH + 4 H(+). The protein operates within sulfur metabolism; hydrogen sulfide biosynthesis; hydrogen sulfide from sulfite (NADPH route): step 1/1. Its function is as follows. Component of the sulfite reductase complex that catalyzes the 6-electron reduction of sulfite to sulfide. This is one of several activities required for the biosynthesis of L-cysteine from sulfate. This Chromohalobacter salexigens (strain ATCC BAA-138 / DSM 3043 / CIP 106854 / NCIMB 13768 / 1H11) protein is Sulfite reductase [NADPH] hemoprotein beta-component.